The sequence spans 748 residues: MIIMKSIILLLAWFLTKTQANMLTESLYLSEYEGSVVLNIIDKNLNGISTLSIFNDSTKLQEVRYVASVCSLRSGSFNITCNVITYGTYHVRMFLSGLNMSAFDLYRLRYVYVGLRDAINYNPKYAEAVMAPFALIGNNNIVTIKLIKDGDNITVGCGFGNVDLSTVNTHASKIGRNINPRFMVGVYTNDSNKLIEDDIYSRYTDSESAGVMRKCNLNEVKTTPQEDCIQPFCTKGTVYGNNLVYGSRLRCFSRTRCSQRSRTVPQSVPWYIPSGFTGKQFMYLDNRLGYLLGLDLTTAIFKYTPIVVGHIVSEYLTGIMNYKRLSVRKGPNIDMRGIIGGEIKMILIRNYRKMLDMSGFTPLPVNGCYVTVIKFIGDKRVFNRVWTPSNNTDDGEEHVFVFHQKRSSNIRDYTLRIFPDSGMDTEGSKYTMNTITDVGCSRETHHKSVYPATIKKAIERFCVDQPNISCEYVKDIDRVDINPCGCKQRANRCGERYSNNTLKATIEFEVPKIYDTPYTCEFLGYKSVNSLTFDSPPPPPTTTQAPPPPPTTTQAPPPPPTTTQAPPPPIVINTTAAPLAPITNATLPPSDVITPEAVNLTDDTPVVNEPVNSTFINDTDVLDDSPTTSAPQAPGIVGIIVNKITTTPAPSIGRAPIPPPDVPVEPPRSIPTTNAPSPEEDTVVLSKSDIMRRFLIRLKTRDGETVDIYTWPELNLAPFKTLSYAGIGVVSFALLFTILVVCLIKFSI.

An N-terminal signal peptide occupies residues 1 to 20 (MIIMKSIILLLAWFLTKTQA). Topologically, residues 21–723 (NMLTESLYLS…LNLAPFKTLS (703 aa)) are extracellular. N-linked (GlcNAc...) asparagine; by host glycans are attached at residues Asn-55, Asn-78, Asn-99, Asn-152, Asn-189, Asn-390, Asn-467, and Asn-499. The disordered stretch occupies residues 531 to 574 (LTFDSPPPPPTTTQAPPPPPTTTQAPPPPPTTTQAPPPPIVINT). The span at 535–570 (SPPPPPTTTQAPPPPPTTTQAPPPPPTTTQAPPPPI) shows a compositional bias: pro residues. Asn-573, Asn-584, Asn-599, Asn-612, and Asn-617 each carry an N-linked (GlcNAc...) asparagine; by host glycan. The tract at residues 650–680 (PSIGRAPIPPPDVPVEPPRSIPTTNAPSPEE) is disordered. Over residues 656-669 (PIPPPDVPVEPPRS) the composition is skewed to pro residues. A helical transmembrane segment spans residues 724 to 744 (YAGIGVVSFALLFTILVVCLI). Residues 745-748 (KFSI) are Cytoplasmic-facing.

It localises to the host membrane. This is Putative transmembrane protein ORF88 from Magallana gigas (Pacific oyster).